A 430-amino-acid polypeptide reads, in one-letter code: Cytochrome P450 monooxygenase FGSG_15680 (430 aa).

Position 351 (cysteine 351) interacts with heme.

It belongs to the cytochrome P450 family. Heme serves as cofactor.

Its pathway is mycotoxin biosynthesis. In terms of biological role, cytochrome P450 monooxygenase; part of the gene cluster that mediates the biosynthesis of gramillins A and B, bicyclic lipopeptides that induce cell death in maize leaves but not in wheat leaves. The nonribosomal peptide synthetase GRA1 incorporates respectively a glutamic adic (Glu), a leucine (Leu), a serine (Ser), a hydroxyglutamine (HOGln), a 2-amino decanoic acid, and 2 cysteins (CysB and CysA). The biosynthesis of 2-amino decanoic acid incorporated in gramillins could be initiated by a fatty acid synthase composed of the alpha and beta subunits FGSG_00036 and FGSG_11656. The cytochrome P450 monooxygenase FGSG_15680 could hydroxylate the fatty acid chain. Subsequent oxidation to the ketone by the oxidoreductase FGSG_00048 and transamination by aminotransferase FGSG_00049 could form 2-amino-decanoic acid. On the other hand, FGSG_15680 could also be responsible for the HO-modified glutamine at the gamma-position. Whether hydroxylation occurs on the fully assembled product or on the Gln residue prior to assembly into the gramillins requires further proof. The thioredoxin FGSG_00043 could also be required for the disulfide-bond formation between CysA and CysB. The specific involvement of the remaining proteins from the cluster is more difficult to discern, but could have broader regulatory (FGSG_00040 and FGSG_11657) or enzymatic functions (FGSG_00044 and FGSG_00045). The final C-domain of GRA1 does not possess the expected sequence of a termination CT domain, often implicated in macrocyclization and release of a cyclopeptidein fungal NRPs; and the thioesterase FGSG_00047 may act in concert with the terminal C-domain of GRA1 to catalyze the formation of the macrocyclic anhydride and release of the products. This is Cytochrome P450 monooxygenase FGSG_15680 from Gibberella zeae (strain ATCC MYA-4620 / CBS 123657 / FGSC 9075 / NRRL 31084 / PH-1) (Wheat head blight fungus).